A 3133-amino-acid polypeptide reads, in one-letter code: Cysteine repeat modular protein A (3133 aa).

Residues 1–39 form a disordered region; that stretch reads MDSASTSMSRVHPSGVYRRPLLPSGGPRSTSERDERVDL. The segment covering 30–39 has biased composition (basic and acidic residues); it reads TSERDERVDL. Residues 123–143 form a helical membrane-spanning segment; sequence LFLLFSSSPLLLLLLLHQFFI. Basic and acidic residues-rich tracts occupy residues 173 to 211 and 301 to 311; these read TFEE…DGKE and NESEKAERARL. Disordered regions lie at residues 173 to 234 and 294 to 317; these read TFEE…EGRR and VSPS…STPA. Residues Asn301, Asn392, and Asn470 are each glycosylated (N-linked (GlcNAc...) asparagine). The Kringle domain maps to 577–644; it reads DETLEQGKLY…DPHVRFDFCD (68 aa). 2 disulfides stabilise this stretch: Cys599/Cys631 and Cys620/Cys643. N-linked (GlcNAc...) asparagine glycans are attached at residues Asn1364 and Asn1532. 3 consecutive transmembrane segments (helical) span residues 2229–2249, 2276–2296, and 2339–2359; these read MVWN…FNIV, LTGI…PSWI, and VFYA…MSII. Asn2369 carries an N-linked (GlcNAc...) asparagine glycan. Helical transmembrane passes span 2420-2440, 2489-2509, and 2539-2559; these read AAKF…FVYS, VGIT…FLVL, and WEMV…VALI. A glycan (N-linked (GlcNAc...) asparagine) is linked at Asn2565. A helical transmembrane segment spans residues 2569-2589; sequence VWLAVVIAVIFLIIHLVTQPF. The N-linked (GlcNAc...) asparagine glycan is linked to Asn2602. Transmembrane regions (helical) follow at residues 2607-2627 and 2632-2652; these read IWTI…SGSV and LLFV…SLMF. Basic and acidic residues-rich tracts occupy residues 2827 to 2838 and 3049 to 3069; these read FAAKDETPTAEE and QEEN…DREI. Disordered regions lie at residues 2827 to 2847 and 3049 to 3101; these read FAAK…DERL and QEEN…LPEG. Residues 2955–3068 adopt a coiled-coil conformation; it reads SEALQKRNRK…KEEREEADRE (114 aa). The span at 3083–3094 shows a compositional bias: acidic residues; the sequence is GEDDTATIDDSS.

Component of a complex, at least composed of cysteine repeat modular protein A (CRMPa), cysteine repeat modular protein B (CRMPb), micronemal protein 15 (MIC15) and thrombospondin type 1 domain-containing protein (TSP1).

It is found in the cell membrane. The protein localises to the endoplasmic reticulum. Its subcellular location is the golgi apparatus. In terms of biological role, required for triggering rhoptry secretion. Plays a role in host cell invasion. This chain is Cysteine repeat modular protein A, found in Toxoplasma gondii.